The sequence spans 905 residues: DNA gyrase subunit A (905 aa).

The Topo IIA-type catalytic domain occupies 35–524 (IPDVRDGLKP…GEFDQDIEDL (490 aa)). The active-site O-(5'-phospho-DNA)-tyrosine intermediate is Tyr-123. Residues 551-557 (QKRGGKG) carry the GyrA-box motif. A disordered region spans residues 882 to 905 (IAESSDDNEEDSEFEEEVAEEGSE). Positions 885 to 905 (SSDDNEEDSEFEEEVAEEGSE) are enriched in acidic residues.

The protein belongs to the type II topoisomerase GyrA/ParC subunit family. As to quaternary structure, heterotetramer, composed of two GyrA and two GyrB chains. In the heterotetramer, GyrA contains the active site tyrosine that forms a transient covalent intermediate with DNA, while GyrB binds cofactors and catalyzes ATP hydrolysis.

It localises to the cytoplasm. It carries out the reaction ATP-dependent breakage, passage and rejoining of double-stranded DNA.. Functionally, a type II topoisomerase that negatively supercoils closed circular double-stranded (ds) DNA in an ATP-dependent manner to modulate DNA topology and maintain chromosomes in an underwound state. Negative supercoiling favors strand separation, and DNA replication, transcription, recombination and repair, all of which involve strand separation. Also able to catalyze the interconversion of other topological isomers of dsDNA rings, including catenanes and knotted rings. Type II topoisomerases break and join 2 DNA strands simultaneously in an ATP-dependent manner. This is DNA gyrase subunit A from Rickettsia bellii (strain RML369-C).